The primary structure comprises 95 residues: Co-chaperonin GroES (95 aa).

The protein belongs to the GroES chaperonin family. As to quaternary structure, heptamer of 7 subunits arranged in a ring. Interacts with the chaperonin GroEL.

The protein localises to the cytoplasm. Its function is as follows. Together with the chaperonin GroEL, plays an essential role in assisting protein folding. The GroEL-GroES system forms a nano-cage that allows encapsulation of the non-native substrate proteins and provides a physical environment optimized to promote and accelerate protein folding. GroES binds to the apical surface of the GroEL ring, thereby capping the opening of the GroEL channel. This is Co-chaperonin GroES from Neisseria meningitidis serogroup C (strain 053442).